Consider the following 802-residue polypeptide: DNA mismatch repair protein MutS (802 aa).

Position 617 to 624 (617 to 624) interacts with ATP; that stretch reads GPNMGGKS.

It belongs to the DNA mismatch repair MutS family.

Its function is as follows. This protein is involved in the repair of mismatches in DNA. It is possible that it carries out the mismatch recognition step. This protein has a weak ATPase activity. This Buchnera aphidicola subsp. Acyrthosiphon pisum (strain 5A) protein is DNA mismatch repair protein MutS.